The following is a 290-amino-acid chain: Agroclavine dehydrogenase (290 aa).

Belongs to the fgaFS/easG family. As to quaternary structure, monomer.

The enzyme catalyses agroclavine + NADP(+) = didehydroagroclavine + NADPH + H(+). The protein operates within alkaloid biosynthesis; ergot alkaloid biosynthesis. Functionally, agroclavine dehydrogenase; part of the gene cluster that mediates the biosynthesis of fungal ergot alkaloid. DmaW catalyzes the first step of ergot alkaloid biosynthesis by condensing dimethylallyl diphosphate (DMAP) and tryptophan to form 4-dimethylallyl-L-tryptophan. The second step is catalyzed by the methyltransferase easF that methylates 4-dimethylallyl-L-tryptophan in the presence of S-adenosyl-L-methionine, resulting in the formation of 4-dimethylallyl-L-abrine. The catalase easC and the FAD-dependent oxidoreductase easE then transform 4-dimethylallyl-L-abrine to chanoclavine-I which is further oxidized by easD in the presence of NAD(+), resulting in the formation of chanoclavine-I aldehyde. Agroclavine dehydrogenase easG then mediates the conversion of chanoclavine-I aldehyde to agroclavine via a non-enzymatic adduct reaction: the substrate is an iminium intermediate that is formed spontaneously from chanoclavine-I aldehyde in the presence of glutathione. The presence of easA is not required to complete this reaction. Further conversion of agroclavine to paspalic acid is a two-step process involving oxidation of agroclavine to elymoclavine and of elymoclavine to paspalic acid, the second step being performed by the elymoclavine oxidase cloA. Paspalic acid is then further converted to D-lysergic acid. Ergopeptines are assembled from D-lysergic acid and three different amino acids by the D-lysergyl-peptide-synthetases composed each of a monomudular and a trimodular nonribosomal peptide synthetase subunit. LpsB and lpsC encode the monomodular subunits responsible for D-lysergic acid activation and incorporation into the ergopeptine backbone. LpsA1 and A2 subunits encode the trimodular nonribosomal peptide synthetase assembling the tripeptide portion of ergopeptines. LpsA1 is responsible for formation of the major ergopeptine, ergotamine, and lpsA2 for alpha-ergocryptine, the minor ergopeptine of the total alkaloid mixture elaborated by C.purpurea. D-lysergyl-tripeptides are assembled by the nonribosomal peptide synthetases and released as N-(D-lysergyl-aminoacyl)-lactams. Cyclolization of the D-lysergyl-tripeptides is performed by the Fe(2+)/2-ketoglutarate-dependent dioxygenase easH which introduces a hydroxyl group into N-(D-lysergyl-aminoacyl)-lactam at alpha-C of the aminoacyl residue followed by spontaneous condensation with the terminal lactam carbonyl group. This Claviceps purpurea (strain 20.1) (Ergot fungus) protein is Agroclavine dehydrogenase.